Here is a 281-residue protein sequence, read N- to C-terminus: Pantothenate synthetase (281 aa).

30 to 37 (MGYLHEGH) lines the ATP pocket. His37 serves as the catalytic Proton donor. Gln61 contributes to the (R)-pantoate binding site. Residue Gln61 coordinates beta-alanine. 147-150 (GEKD) provides a ligand contact to ATP. A (R)-pantoate-binding site is contributed by Gln153. Residues Ile176 and 184-187 (KSSR) contribute to the ATP site.

Belongs to the pantothenate synthetase family. As to quaternary structure, homodimer.

Its subcellular location is the cytoplasm. It catalyses the reaction (R)-pantoate + beta-alanine + ATP = (R)-pantothenate + AMP + diphosphate + H(+). Its pathway is cofactor biosynthesis; (R)-pantothenate biosynthesis; (R)-pantothenate from (R)-pantoate and beta-alanine: step 1/1. Functionally, catalyzes the condensation of pantoate with beta-alanine in an ATP-dependent reaction via a pantoyl-adenylate intermediate. The polypeptide is Pantothenate synthetase (Clostridium botulinum (strain 657 / Type Ba4)).